The chain runs to 630 residues: Pentatricopeptide repeat-containing protein At1g62670, mitochondrial (630 aa).

Residues 1–22 constitute a mitochondrion transit peptide; that stretch reads MRISFAIASTAKRFVHRSLVVR. 16 PPR repeats span residues 44 to 79, 80 to 114, 115 to 149, 150 to 184, 185 to 219, 220 to 254, 255 to 289, 290 to 324, 325 to 359, 360 to 394, 395 to 429, 430 to 464, 465 to 499, 500 to 534, 535 to 569, and 570 to 604; these read TSYDYREKLSRNGLSELKLDDAVALFGEMVKSRPFP, SIIEFSKLLSAIAKMNKFDVVISLGEQMQNLGIPH, NHYTYSILINCFCRRSQLPLALAVLGKMMKLGYEP, NIVTLSSLLNGYCHSKRISEAVALVDQMFVTGYQP, NTVTFNTLIHGLFLHNKASEAMALIDRMVAKGCQP, DLVTYGVVVNGLCKRGDTDLAFNLLNKMEQGKLEP, GVLIYNTIIDGLCKYKHMDDALNLFKEMETKGIRP, NVVTYSSLISCLCNYGRWSDASRLLSDMIERKINP, DVFTFSALIDAFVKEGKLVEAEKLYDEMVKRSIDP, SIVTYSSLINGFCMHDRLDEAKQMFEFMVSKHCFP, DVVTYNTLIKGFCKYKRVEEGMEVFREMSQRGLVG, NTVTYNILIQGLFQAGDCDMAQEIFKEMVSDGVPP, NIMTYNTLLDGLCKNGKLEKAMVVFEYLQRSKMEP, TIYTYNIMIEGMCKAGKVEDGWDLFCNLSLKGVKP, DVVAYNTMISGFCRKGSKEEADALFKEMKEDGTLP, and NSGCYNTLIRARLRDGDREASAELIKEMRSCGFAG.

The protein belongs to the PPR family. P subfamily.

The protein resides in the mitochondrion. The polypeptide is Pentatricopeptide repeat-containing protein At1g62670, mitochondrial (Arabidopsis thaliana (Mouse-ear cress)).